A 128-amino-acid polypeptide reads, in one-letter code: MHRKRLRVVLSATLLDLITCVQLMLDPLVRSHVIARLVRWRHHRLLLAELVLSETRVRILRLALEQGALESGAMSSRALARIVIPRSSSRPNWKLSRVVSELSDNSKTNVYKNQLFIHCARYLLHVLP.

The first 31 residues, 1–31 (MHRKRLRVVLSATLLDLITCVQLMLDPLVRS), serve as a signal peptide directing secretion. Residues 58–61 (RILR) carry the RxLR motif.

It belongs to the RxLR effector family.

It is found in the secreted. The protein localises to the host nucleus. The protein resides in the host cytoplasm. In terms of biological role, secreted effector that completely suppresses the host cell death induced by cell death-inducing proteins. The protein is Secreted RxLR effector protein 57 of Plasmopara viticola (Downy mildew of grapevine).